The primary structure comprises 1402 residues: Transcription elongation factor spt-6 (1402 aa).

The segment at 1–199 (MSNSMRDLID…PKDRGLNIDT (199 aa)) is disordered. 4 stretches are compositionally biased toward acidic residues: residues 10-28 (DGEAELDDEEDDESFDEEA), 40-52 (DSSEEEEDDEDEE), 62-75 (IVDEDEEDEAEDSD), and 90-102 (EEEEQLDEEDLDL). Basic and acidic residues predominate over residues 123 to 135 (HRDDHRPTERRGL). Positions 161 to 176 (DEFDDFIEDDYPEDDE) are enriched in acidic residues. Basic and acidic residues predominate over residues 177 to 199 (ERRHREEDEEVARPKDRGLNIDT). An S1 motif domain is found at 1094–1161 (GMIVAANVRV…KEFVSKLSMR (68 aa)). Residues 1209–1306 (PLFKPFNSTQ…KKVDELMQCD (98 aa)) enclose the SH2 domain.

The protein belongs to the SPT6 family.

It localises to the nucleus. It is found in the chromosome. In terms of biological role, histone H3-H4 chaperone that plays a role in maintenance of chromatin structure during RNA polymerase II transcription elongation thereby repressing transcription initiation from cryptic promoters. Mediates the reassembly of nucleosomes onto the promoters of at least a selected set of genes during repression; the nucleosome reassembly is essential for transcriptional repression. Essential for viability. The sequence is that of Transcription elongation factor spt-6 (spt-6) from Neurospora crassa (strain ATCC 24698 / 74-OR23-1A / CBS 708.71 / DSM 1257 / FGSC 987).